Here is a 501-residue protein sequence, read N- to C-terminus: Dipeptide and tripeptide permease A (501 aa).

The Cytoplasmic segment spans residues 1–21 (MSTANKKPTESVSLNAFKQPK). The helical transmembrane segment at 22–44 (AFYLIFSIELWERFGYYGLQGIM) threads the bilayer. Over 45-59 (AVYLVKQLGMSEADS) the chain is Periplasmic. The helical transmembrane segment at 60–80 (ITLFSSFSALVYGLVAIGGWL) threads the bilayer. Residues 81 to 89 (GDKILGTKR) lie on the Cytoplasmic side of the membrane. A helical transmembrane segment spans residues 90–110 (VIMLGAVVLAIGYALVAWSGH). Residue aspartate 111 is a topological domain, periplasmic. The chain crosses the membrane as a helical span at residues 112-132 (AGIVYMGMAAIAVGNGLFKAN). The Cytoplasmic segment spans residues 133–153 (PSSLLSTCYAKDDPRLDGAFT). Residues 154-174 (MYYMSVNIGSFFSMLATPWLA) traverse the membrane as a helical segment. Topologically, residues 175–178 (ARYG) are periplasmic. A helical transmembrane segment spans residues 179-199 (WSTAFALSVVGMLITVVNFAF). Topologically, residues 200 to 219 (CQRWVKSYGSKPDFEPINFR) are cytoplasmic. A helical transmembrane segment spans residues 220-240 (NLLLTIVGIVVLIAVATWLLH). Residues 241-246 (NQDIAR) lie on the Periplasmic side of the membrane. The helical transmembrane segment at 247-267 (MVLGVIALGIVIIFGKEAFSM) threads the bilayer. The Cytoplasmic portion of the chain corresponds to 268–274 (HGAARRK). A helical membrane pass occupies residues 275–295 (MIVAFILMLQAIIFFVLYSQM). The Periplasmic portion of the chain corresponds to 296 to 320 (PTSLNFFAIRNVEHSILGIAFEPEQ). The chain crosses the membrane as a helical span at residues 321–341 (YQALNPFWIIIGSPILAAIYN). Residues 342 to 352 (RMGDTLPMPMK) are Cytoplasmic-facing. Residues 353–373 (FAIGMVLCSGAFLILPLGAKF) traverse the membrane as a helical segment. At 374-383 (ANDAGIVSVN) the chain is on the periplasmic side. Residues 384–404 (WLIASYGLQSIGELMISGLGL) form a helical membrane-spanning segment. The Cytoplasmic portion of the chain corresponds to 405–414 (AMVAQLVPQR). The chain crosses the membrane as a helical span at residues 415-435 (LMGFIMGSWFLTTAGANIIGG). Residues 436 to 459 (YVANLMAVPSDVTDPLMSLEVYGR) lie on the Periplasmic side of the membrane. A helical membrane pass occupies residues 460–480 (VFMQIGIATAVIAVLMLLTAP). Residues 481–501 (KLNRMTQDDDTAEKGSKAATV) are Cytoplasmic-facing.

It belongs to the major facilitator superfamily. Proton-dependent oligopeptide transporter (POT/PTR) (TC 2.A.17) family. DtpA subfamily.

The protein resides in the cell inner membrane. Its function is as follows. Proton-dependent permease that transports di- and tripeptides. The chain is Dipeptide and tripeptide permease A from Salmonella typhimurium (strain LT2 / SGSC1412 / ATCC 700720).